The chain runs to 353 residues: tRNA-specific 2-thiouridylase MnmA 1 (353 aa).

ATP contacts are provided by residues 9–16 and methionine 35; that span reads AMSGGVDS. The active-site Nucleophile is the cysteine 98. An intrachain disulfide couples cysteine 98 to cysteine 194. Glycine 122 contributes to the ATP binding site. The interaction with tRNA stretch occupies residues 144–146; sequence KDQ. Residue cysteine 194 is the Cysteine persulfide intermediate of the active site. An interaction with tRNA region spans residues 300–301; sequence RY.

This sequence belongs to the MnmA/TRMU family.

Its subcellular location is the cytoplasm. The enzyme catalyses S-sulfanyl-L-cysteinyl-[protein] + uridine(34) in tRNA + AH2 + ATP = 2-thiouridine(34) in tRNA + L-cysteinyl-[protein] + A + AMP + diphosphate + H(+). Functionally, catalyzes the 2-thiolation of uridine at the wobble position (U34) of tRNA, leading to the formation of s(2)U34. The sequence is that of tRNA-specific 2-thiouridylase MnmA 1 from Clostridium botulinum (strain Okra / Type B1).